We begin with the raw amino-acid sequence, 277 residues long: Shikimate dehydrogenase (NADP(+)) (277 aa).

Residues 18-20 and T65 each bind shikimate; that span reads SKS. Catalysis depends on K69, which acts as the Proton acceptor. Residue E81 coordinates NADP(+). Shikimate contacts are provided by N90 and D106. Residues 130-134, 154-159, and M217 each bind NADP(+); these read GAGGA and NRTFSK. Residue Y219 coordinates shikimate. G241 is a binding site for NADP(+).

The protein belongs to the shikimate dehydrogenase family. Homodimer.

The enzyme catalyses shikimate + NADP(+) = 3-dehydroshikimate + NADPH + H(+). The protein operates within metabolic intermediate biosynthesis; chorismate biosynthesis; chorismate from D-erythrose 4-phosphate and phosphoenolpyruvate: step 4/7. Involved in the biosynthesis of the chorismate, which leads to the biosynthesis of aromatic amino acids. Catalyzes the reversible NADPH linked reduction of 3-dehydroshikimate (DHSA) to yield shikimate (SA). In Vibrio campbellii (strain ATCC BAA-1116), this protein is Shikimate dehydrogenase (NADP(+)).